Consider the following 445-residue polypeptide: ATP-dependent protease ATPase subunit HslU (445 aa).

Residues isoleucine 17, 59–64 (GVGKTE), aspartate 254, glutamate 319, and arginine 391 each bind ATP.

Belongs to the ClpX chaperone family. HslU subfamily. In terms of assembly, a double ring-shaped homohexamer of HslV is capped on each side by a ring-shaped HslU homohexamer. The assembly of the HslU/HslV complex is dependent on binding of ATP.

It is found in the cytoplasm. Functionally, ATPase subunit of a proteasome-like degradation complex; this subunit has chaperone activity. The binding of ATP and its subsequent hydrolysis by HslU are essential for unfolding of protein substrates subsequently hydrolyzed by HslV. HslU recognizes the N-terminal part of its protein substrates and unfolds these before they are guided to HslV for hydrolysis. The chain is ATP-dependent protease ATPase subunit HslU from Pseudomonas fluorescens (strain Pf0-1).